Here is a 46-residue protein sequence, read N- to C-terminus: uncharacterized protein (46 aa).

The helical transmembrane segment at M20–I42 threads the bilayer.

It localises to the membrane. This is an uncharacterized protein from Bacillus subtilis (strain 168).